Consider the following 90-residue polypeptide: Large ribosomal subunit protein uL23c (90 aa).

The protein belongs to the universal ribosomal protein uL23 family. Part of the 50S ribosomal subunit.

It is found in the plastid. It localises to the chloroplast. In terms of biological role, binds to 23S rRNA. This chain is Large ribosomal subunit protein uL23c (rpl23), found in Tetradesmus obliquus (Green alga).